Here is a 276-residue protein sequence, read N- to C-terminus: Nuclear egress protein 2 (276 aa).

Topologically, residues 1–245 are perinuclear space; the sequence is MANVLKEKMY…FWRLSERHCR (245 aa). A helical transmembrane segment spans residues 246-264; sequence FALVGICFLLALYFCYVLL. The Nuclear portion of the chain corresponds to 265–276; it reads KKTPTPASGSVV.

The protein belongs to the herpesviridae NEC2 protein family. In terms of assembly, forms a heterohexameric complex with NEC1. In terms of processing, phosphorylated.

The protein resides in the host nucleus inner membrane. Its function is as follows. Plays an essential role in virion nuclear egress, the first step of virion release from infected cell. Within the host nucleus, NEC1 interacts with the newly formed capsid through the vertexes and directs it to the inner nuclear membrane by associating with NEC2. Induces the budding of the capsid at the inner nuclear membrane as well as its envelopment into the perinuclear space. There, the NEC1/NEC2 complex promotes the fusion of the enveloped capsid with the outer nuclear membrane and the subsequent release of the viral capsid into the cytoplasm where it will reach the secondary budding sites in the host Golgi or trans-Golgi network. This Homo sapiens (Human) protein is Nuclear egress protein 2.